We begin with the raw amino-acid sequence, 156 residues long: S-ribosylhomocysteine lyase (156 aa).

Residues His-56, His-60, and Cys-123 each coordinate Fe cation.

The protein belongs to the LuxS family. In terms of assembly, homodimer. Fe cation is required as a cofactor.

It carries out the reaction S-(5-deoxy-D-ribos-5-yl)-L-homocysteine = (S)-4,5-dihydroxypentane-2,3-dione + L-homocysteine. Involved in the synthesis of autoinducer 2 (AI-2) which is secreted by bacteria and is used to communicate both the cell density and the metabolic potential of the environment. The regulation of gene expression in response to changes in cell density is called quorum sensing. Catalyzes the transformation of S-ribosylhomocysteine (RHC) to homocysteine (HC) and 4,5-dihydroxy-2,3-pentadione (DPD). The protein is S-ribosylhomocysteine lyase of Staphylococcus haemolyticus (strain JCSC1435).